Consider the following 250-residue polypeptide: NH(3)-dependent NAD(+) synthetase (250 aa).

An ATP-binding site is contributed by 31-38 (GISGGIDS). Position 37 (aspartate 37) interacts with Mg(2+). Residue arginine 122 participates in deamido-NAD(+) binding. Threonine 142 is an ATP binding site. Glutamate 147 is a binding site for Mg(2+). Lysine 155 and aspartate 162 together coordinate deamido-NAD(+). ATP contacts are provided by lysine 171 and serine 193. Deamido-NAD(+) is bound at residue 239 to 240 (HK).

Belongs to the NAD synthetase family. In terms of assembly, homodimer.

It catalyses the reaction deamido-NAD(+) + NH4(+) + ATP = AMP + diphosphate + NAD(+) + H(+). The protein operates within cofactor biosynthesis; NAD(+) biosynthesis; NAD(+) from deamido-NAD(+) (ammonia route): step 1/1. Functionally, catalyzes the ATP-dependent amidation of deamido-NAD to form NAD. Uses ammonia as a nitrogen source. This is NH(3)-dependent NAD(+) synthetase from Alkaliphilus oremlandii (strain OhILAs) (Clostridium oremlandii (strain OhILAs)).